The chain runs to 899 residues: MSVKPLTELTKNLEAASNELLKTKVLMDMELNYLSIEQLESAQNITDFLNILKQTSSQYSTFIHQHFLFYLLKLSTFSTLNYDLESIKQYMNILNNVCDVATTIHATSSSNFLNNQTVINHIKQYITSNATFTGLSEPIVPNNVISTFRCVEEVVHVCFQCYWHFPFQAQIPQIPNGALEKWLLTQHFKFLNLDYTAFNSLKDQATYLITHEKHLFVPLSSSEYSLTLPLAKNQALNIYTSFTTNTITKSNVPVLAFSAKELTDATPELFFLYDFIIEALYHEHSYNVPQNIIEQFISKNTQFMTDLCNTIQIKCSNKSLTSSEIRHIKELLESCGLTEECCHRLQTSVLISNVSFTSNSWKGYETFISLISQLVLFSDFFYKCLFYFSPTSIGHSKITEILNTVSAIESETLSHANKFSWKLANMLSFFIPKAPSKIILETYTHISPYLMKSAFSIWAKKTWNYTWLDATSPHPTQTHTFKHAPVISQSEVQKYCENLQLGTTEYDSRIVNSHLFAEEFITHHIIPTLTAILQNKVQKNRALFQLRWLIVFASDEAKGLYRIRRPLGLLYFQIIEIFHDSNAAAAAILNVLDYLNEIQQLIQYYVPTYTTPIKFIQELFSIKYKPQSTELSKSIQKFIAETETCVKDILPFIQLGTNMCNTTYYHIENTYNINIQGQSPARLDTKALTHAIKAIQGLTKESWTTISQSYKELQTAYIQLATILETIEKISQHSIAIKVSNPNFIKLNNTFLQCFKKYNTIANLITNSHSFNLTRYFRQIFEPELIPITTVQKILNFNDETDDPQPFLDSLSQPLYSHTNAPKKSELTSEDFNRLLEFANPVFETAPSSIKLHYSDTFNTPQVNINWKTYEHTTYIADSPAELQFTHLTSAILDAELSK.

Residues 463-899 form an interaction with large tegument protein region; that stretch reads WNYTWLDATS…SAILDAELSK (437 aa).

This sequence belongs to the herpesviridae inner tegument protein family. In terms of assembly, interacts (via C-terminus) with the large tegument protein/LTP (via N-terminus).

The protein resides in the virion tegument. Its subcellular location is the host cytoplasm. The protein localises to the host nucleus. It is found in the host Golgi apparatus. It localises to the host trans-Golgi network. Its function is as follows. Plays an essential role in cytoplasmic secondary envelopment during viral egress. Interacts with the capsid via the large tegument protein/LTP and participates in its transport to the host trans-Golgi network (TGN) where secondary envelopment occurs. Modulates tegumentation and capsid accumulation at the viral assembly complex. The sequence is that of Inner tegument protein (63) from Saimiri sciureus (Common squirrel monkey).